Consider the following 244-residue polypeptide: MKERRASQKLSSKSIMDPNQNVKCKIVVVGDSQCGRTALLHVFAKDCFPENYVPTVFENYTASFEIDTQRIELSLWDTSGSPYYDNVRPLSYPDSDAVLICFDISRPETLDSVLKKWKGEIQEFCPNTKMLLVGCKSDLRTDVSTLVELSNHRQTPVSYDQGANMAKQIGAATYIECSALQSENSVRDIFHVATLACVNKTNKNVKRNKSQRATKRISHMPSRPELSAVATDLRKDKAKSCTVM.

30–37 (GDSQCGRT) provides a ligand contact to GTP. Residues 52 to 60 (YVPTVFENY) carry the Effector region motif. GTP contacts are provided by residues 77–81 (DTSGS) and 135–138 (CKSD). Cysteine methyl ester is present on C241. C241 is lipidated: S-farnesyl cysteine. Residues 242–244 (TVM) constitute a propeptide, removed in mature form.

This sequence belongs to the small GTPase superfamily. Rho family. In terms of assembly, binds ROCK1. Interacts with UBXD5.

It is found in the cell membrane. In terms of biological role, binds GTP but lacks intrinsic GTPase activity and is resistant to Rho-specific GTPase-activating proteins. The sequence is that of Rho-related GTP-binding protein RhoE (RND3) from Sus scrofa (Pig).